The chain runs to 64 residues: Large ribosomal subunit protein bL33c (64 aa).

Belongs to the bacterial ribosomal protein bL33 family.

The protein localises to the plastid. The protein resides in the organellar chromatophore. The protein is Large ribosomal subunit protein bL33c of Paulinella chromatophora.